The following is a 163-amino-acid chain: Fatty acid-binding protein homolog (163 aa).

A signal peptide spans 1–23 (MRCLVALILTVLIVTPEVEAKTL).

This sequence belongs to the calycin superfamily. Fatty-acid binding protein (FABP) family. As to expression, abundant in the fluid surrounding the developing embryo of Ascaris suum.

Its function is as follows. May play a role in sequestering potentially toxic fatty acids and their peroxidation products, or it may be involved in the maintenance of the impermeable lipid layer of the eggshell. In Ascaris suum (Pig roundworm), this protein is Fatty acid-binding protein homolog.